The following is a 254-amino-acid chain: Nickel import ATP-binding protein NikD (254 aa).

Residues 2–241 (PQQIELRDIA…PKHAVTRSLV (240 aa)) enclose the ABC transporter domain. An ATP-binding site is contributed by 36–43 (GGSGSGKS).

This sequence belongs to the ABC transporter superfamily. Nickel importer (TC 3.A.1.5.3) family. In terms of assembly, the complex is composed of two ATP-binding proteins (NikD and NikE), two transmembrane proteins (NikB and NikC) and a solute-binding protein (NikA).

Its subcellular location is the cell inner membrane. The enzyme catalyses Ni(2+)(out) + ATP + H2O = Ni(2+)(in) + ADP + phosphate + H(+). Part of the ABC transporter complex NikABCDE involved in nickel import. Responsible for energy coupling to the transport system. The sequence is that of Nickel import ATP-binding protein NikD from Shigella dysenteriae serotype 1 (strain Sd197).